The chain runs to 583 residues: Immunity-related GTPase family Q protein (583 aa).

Cys-152 and Cys-158 are disulfide-bonded. Positions 155-179 (SDRCEELERLQVVLRTQAEALQRLL) form a coiled coil. The short motif at 186–189 (FEVL) is the LIR 1 element. Thr-203 carries the phosphothreonine modification. An IRG-type G domain is found at 223–409 (ARLDLAVAGT…PGLGTWLQHA (187 aa)). The disordered stretch occupies residues 322–373 (APLVGVRTDGQGEDPPEVLEEEKAQNASDGNSGDARSEGKKAGIGDSGCTAA). Acidic residues predominate over residues 332-341 (QGEDPPEVLE). Residues 381-384 (WEVL) carry the LIR 2 motif.

Belongs to the TRAFAC class dynamin-like GTPase superfamily. IRG family. In terms of assembly, interacts (via LIR motif 1) with GABARAPL2. Interacts (via LIR motif 2) with MAP1LC3B/LC3B.

Its subcellular location is the lysosome. The protein localises to the cytoplasmic vesicle. It localises to the autophagosome. In terms of biological role, autophagy receptor that specifically promotes clearance of misfolded MHC class I molecules by targeting them to the lysosome for degradation. Acts as a molecular adapter that specifically recognizes and binds (1) misfolded MHC class I molecules following their ubiquitination, as well as (2) autophagy-related proteins, promoting the recruitment of misfolded MHC class I molecules to autophagy machinery for degradation. Degradation of misfolded MHC class I molecules is essential to prevent accumulation of defective MHC class I complexes at the surface of CD8(+) T-cells and prevent a stronger T-cell-mediated response. In contrast to other members of the family, does not show GTPase activity. The protein is Immunity-related GTPase family Q protein (Irgq) of Mus musculus (Mouse).